The following is a 549-amino-acid chain: Chaperonin GroEL (549 aa).

ATP-binding positions include 29 to 32, Lys-50, 86 to 90, Gly-413, 479 to 481, and Asp-496; these read TLGP, DGTTT, and NAA. The segment at 522–549 is disordered; that stretch reads VSDKPEKPQQGGQGGGGMGGGDMGGMDF. Residues 532-549 are compositionally biased toward gly residues; that stretch reads GGQGGGGMGGGDMGGMDF.

It belongs to the chaperonin (HSP60) family. As to quaternary structure, forms a cylinder of 14 subunits composed of two heptameric rings stacked back-to-back. Interacts with the co-chaperonin GroES.

It is found in the cytoplasm. The enzyme catalyses ATP + H2O + a folded polypeptide = ADP + phosphate + an unfolded polypeptide.. Together with its co-chaperonin GroES, plays an essential role in assisting protein folding. The GroEL-GroES system forms a nano-cage that allows encapsulation of the non-native substrate proteins and provides a physical environment optimized to promote and accelerate protein folding. This is Chaperonin GroEL from Deinococcus deserti (strain DSM 17065 / CIP 109153 / LMG 22923 / VCD115).